A 264-amino-acid polypeptide reads, in one-letter code: 3-methyl-2-oxobutanoate hydroxymethyltransferase (264 aa).

The Mg(2+) site is built by Asp-45 and Asp-84. 3-methyl-2-oxobutanoate is bound by residues 45–46, Asp-84, and Lys-113; that span reads DS. Residue Glu-115 coordinates Mg(2+). Glu-182 (proton acceptor) is an active-site residue.

It belongs to the PanB family. As to quaternary structure, homodecamer; pentamer of dimers. It depends on Mg(2+) as a cofactor.

It localises to the cytoplasm. The enzyme catalyses 3-methyl-2-oxobutanoate + (6R)-5,10-methylene-5,6,7,8-tetrahydrofolate + H2O = 2-dehydropantoate + (6S)-5,6,7,8-tetrahydrofolate. It functions in the pathway cofactor biosynthesis; (R)-pantothenate biosynthesis; (R)-pantoate from 3-methyl-2-oxobutanoate: step 1/2. In terms of biological role, catalyzes the reversible reaction in which hydroxymethyl group from 5,10-methylenetetrahydrofolate is transferred onto alpha-ketoisovalerate to form ketopantoate. The protein is 3-methyl-2-oxobutanoate hydroxymethyltransferase of Caldicellulosiruptor bescii (strain ATCC BAA-1888 / DSM 6725 / KCTC 15123 / Z-1320) (Anaerocellum thermophilum).